Reading from the N-terminus, the 164-residue chain is uncharacterized protein (164 aa).

2 consecutive CBS domains span residues Ala-9–Ser-66 and Met-72–Met-128.

This is an uncharacterized protein from Acidianus ambivalens (Desulfurolobus ambivalens).